A 421-amino-acid polypeptide reads, in one-letter code: Histidine--tRNA ligase (421 aa).

Belongs to the class-II aminoacyl-tRNA synthetase family. In terms of assembly, homodimer.

It localises to the cytoplasm. It carries out the reaction tRNA(His) + L-histidine + ATP = L-histidyl-tRNA(His) + AMP + diphosphate + H(+). The protein is Histidine--tRNA ligase of Fervidobacterium nodosum (strain ATCC 35602 / DSM 5306 / Rt17-B1).